The chain runs to 406 residues: Endoglucanase 1 (406 aa).

The N-terminal stretch at 1–43 (MNSKKIGAMIAAAVLSLIVMTPAATRKIVQRQTRNSSTAVENS) is a signal peptide. Composition is skewed to polar residues over residues 30–41 (QRQTRNSSTAVE) and 51–62 (ENVPVSQTHTND). The interval 30 to 62 (QRQTRNSSTAVENSAADESETENVPVSQTHTND) is disordered. The active-site Proton donor is the E210. E330 functions as the Nucleophile in the catalytic mechanism.

This sequence belongs to the glycosyl hydrolase 5 (cellulase A) family.

It carries out the reaction Endohydrolysis of (1-&gt;4)-beta-D-glucosidic linkages in cellulose, lichenin and cereal beta-D-glucans.. In Ruminococcus albus, this protein is Endoglucanase 1 (Eg I).